A 264-amino-acid chain; its full sequence is tRNA (guanine-N(1)-)-methyltransferase (264 aa).

S-adenosyl-L-methionine contacts are provided by residues G133 and 152–157; that span reads LGDFVM. Positions 240 to 251 are enriched in basic and acidic residues; sequence QRRPDLWRKARG. The segment at 240 to 264 is disordered; the sequence is QRRPDLWRKARGGEPPADESGEVRR. Acidic residues predominate over residues 255 to 264; the sequence is PADESGEVRR.

Belongs to the RNA methyltransferase TrmD family. Homodimer.

It localises to the cytoplasm. It catalyses the reaction guanosine(37) in tRNA + S-adenosyl-L-methionine = N(1)-methylguanosine(37) in tRNA + S-adenosyl-L-homocysteine + H(+). Its function is as follows. Specifically methylates guanosine-37 in various tRNAs. The sequence is that of tRNA (guanine-N(1)-)-methyltransferase from Sorangium cellulosum (strain So ce56) (Polyangium cellulosum (strain So ce56)).